The sequence spans 818 residues: H(+)/Cl(-) exchange transporter 3 (818 aa).

The Cytoplasmic segment spans residues 1-125 (MESEQLFHRG…WEMTKSLYDA (125 aa)). A Di-leucine internalization motif; mediates targeting to late endosome and lysosome membranes motif is present at residues 13–17 (RNSYN). The IP motif; mediates targeting to recycling endosomes motif lies at 18–19 (SI). 3 short sequence motifs (di-leucine internalization motif; mediates targeting to late endosome and lysosome membranes) span residues 28-29 (LL), 46-47 (LL), and 71-75 (LLDLL). Residues 126–163 (WSGWLVVTLTGLASGALAGLIDIAADWMTDLKEGICLS) traverse the membrane as a helical segment. Asn-177 carries N-linked (GlcNAc...) asparagine glycosylation. A helical transmembrane segment spans residues 209–232 (MNYIMYIFWALSFAFLAVSLVKVF). The Selectivity filter part_1 motif lies at 238–242 (GSGIP). Position 239 (Ser-239) interacts with chloride. The segment at residues 241 to 248 (IPEIKTIL) is an intramembrane region (helical). A run of 2 helical transmembrane segments spans residues 258–276 (GKWT…VASG) and 282–301 (EGPL…YLFP). Residues 280–284 (GKEGP) carry the Selectivity filter part_2 motif. Intramembrane regions (helical) lie at residues 313-325 (VLSA…VSVA) and 329-337 (PIGGVLFSL). The next 3 helical transmembrane spans lie at 349 to 367 (LWRS…RSIN), 391 to 416 (FPFI…AWCR), and 423 to 443 (FGKY…VIAF). Residues Asn-451 and Asn-479 are each glycosylated (N-linked (GlcNAc...) asparagine). The next 2 membrane-spanning stretches (helical) occupy residues 500–520 (IWQL…TFGI) and 525–544 (GLFI…VGIA). A Selectivity filter part_3 motif is present at residues 525–529 (GLFIP). Phe-527 contacts chloride. 2 consecutive intramembrane regions (helical) follow at residues 572–586 (GLYA…LGGV) and 590–601 (TVSLVVIVFELT). An intramembrane region (note=Loop between two helices) is located at residues 602–605 (GGLE). Residues 606-624 (YIVPLMAAVMTSKWVGDAF) traverse the membrane as a helical segment. Over 625-818 (GREGIYEAHI…NQDPASIMFN (194 aa)) the chain is Cytoplasmic. Tyr-630 contacts chloride. CBS domains follow at residues 658–722 (MRPR…ARKK) and 755–812 (LDMS…NQDP). Residues 689-691 (YNG) and 796-799 (TKKD) contribute to the ATP site.

Belongs to the chloride channel (TC 2.A.49) family. ClC-3/CLCN3 subfamily. In terms of assembly, monomer and homodimer. Forms heterodimers with CLCN4. Post-translationally, N-glycosylated. Detected in kidney, in the apical part of proximal tubule cells (at protein level). Expressed at high levels in the kidney while a low level expression is seen in the brain. Within the brain, it is prominent in the hippocampus, cerebral cortex and olfactory bulb. In terms of tissue distribution, brain, pancreas, kidney, liver, lung, retina, olfactory bulb, and spinal cord. As to expression, pancreas, kidney, liver, lung and retina. Brain, heart, pancreas, kidney, liver, lung, retina, olfactory bulb, and spinal cord. In terms of tissue distribution, expressed at high levels in the liver and at low levels in the brain.

It is found in the cytoplasmic vesicle. Its subcellular location is the secretory vesicle membrane. It localises to the lysosome membrane. The protein resides in the late endosome membrane. The protein localises to the cell membrane. It is found in the early endosome membrane. Its subcellular location is the recycling endosome membrane. Inhibited by Cd(2+). In terms of biological role, may influence large dense-core vesicle exocytosis in adrenal chromaffin cells. Strongly outwardly rectifying, electrogenic H(+)/Cl(-)exchanger which mediates the exchange of chloride ions against protons. The CLC channel family contains both chloride channels and proton-coupled anion transporters that exchange chloride or another anion for protons. The presence of conserved gating glutamate residues is typical for family members that function as antiporters. Functionally, strongly outwardly rectifying, electrogenic H(+)/Cl(-)exchanger which mediates the exchange of chloride ions against protons. Facilitates endosomal acidification and chloride accumulation in hepatocytes. Its function is as follows. Strongly outwardly rectifying, electrogenic H(+)/Cl(-)exchanger which mediates the exchange of chloride ions against protons. The chain is H(+)/Cl(-) exchange transporter 3 (Clcn3) from Mus musculus (Mouse).